The following is a 435-amino-acid chain: 5-hydroxybenzimidazole synthase (435 aa).

Residues Met95, Tyr124, His163, 186-188 (SKG), 227-230 (NGLR), and Glu266 contribute to the substrate site. His270 serves as a coordination point for Zn(2+). Tyr293 contacts substrate. His334 is a binding site for Zn(2+). Positions 410, 413, and 417 each coordinate [4Fe-4S] cluster.

It belongs to the ThiC family. 5-hydroxybenzimidazole synthase subfamily. As to quaternary structure, homodimer. [4Fe-4S] cluster serves as cofactor.

The catalysed reaction is 5-amino-1-(5-phospho-beta-D-ribosyl)imidazole + AH2 + S-adenosyl-L-methionine = 5-hydroxybenzimidazole + 5'-deoxyadenosine + formate + L-methionine + A + NH4(+) + phosphate + 2 H(+). Its function is as follows. Catalyzes the conversion of aminoimidazole ribotide (AIR) to 5-hydroxybenzimidazole (5-HBI) in a radical S-adenosyl-L-methionine (SAM)-dependent reaction. Is thus involved in the anaerobic biosynthesis of the benzimidazole lower axial ligand of the cobamide produced by G.sulfurreducens. This is 5-hydroxybenzimidazole synthase from Geobacter sulfurreducens (strain ATCC 51573 / DSM 12127 / PCA).